Reading from the N-terminus, the 363-residue chain is Putative C-&gt;U-editing enzyme APOBEC-4 (363 aa).

A CMP/dCMP-type deaminase domain is found at 61–177 (PQTKHLTFYE…AWNREALRSL (117 aa)). His-93 is a binding site for Zn(2+). The Proton donor role is filled by Glu-95. Positions 127 and 134 each coordinate Zn(2+).

The protein belongs to the cytidine and deoxycytidylate deaminase family. Requires Zn(2+) as cofactor.

Its function is as follows. Putative C to U editing enzyme whose physiological substrate is not yet known. In Macaca fascicularis (Crab-eating macaque), this protein is Putative C-&gt;U-editing enzyme APOBEC-4 (APOBEC4).